The chain runs to 124 residues: Urease subunit beta (124 aa).

The protein belongs to the urease beta subunit family. Heterotrimer of UreA (gamma), UreB (beta) and UreC (alpha) subunits. Three heterotrimers associate to form the active enzyme.

It is found in the cytoplasm. It catalyses the reaction urea + 2 H2O + H(+) = hydrogencarbonate + 2 NH4(+). It participates in nitrogen metabolism; urea degradation; CO(2) and NH(3) from urea (urease route): step 1/1. The polypeptide is Urease subunit beta (Ureaplasma parvum serovar 3 (strain ATCC 27815 / 27 / NCTC 11736)).